Here is a 614-residue protein sequence, read N- to C-terminus: Dolichyl-diphosphooligosaccharide--protein glycosyltransferase subunit 1A (614 aa).

The N-terminal stretch at 1 to 25 (MKQSSVVDLLLLLLAIALLATPAFS) is a signal peptide. Residues 26–432 (DLVLSKVERR…QVYYKFSNIN (407 aa)) are Lumenal-facing. 2 N-linked (GlcNAc...) asparagine glycosylation sites follow: N94 and N299. K311 is covalently cross-linked (Glycyl lysine isopeptide (Lys-Gly) (interchain with G-Cter in ubiquitin)). A glycan (N-linked (GlcNAc...) asparagine) is linked at N352. A helical membrane pass occupies residues 433-453 (LLSEPLMLISGFFILFITCII). Over 454-614 (YTRADISISK…EDLLEFIDEI (161 aa)) the chain is Cytoplasmic.

This sequence belongs to the OST1 family. Component of the oligosaccharyltransferase (OST) complex.

The protein localises to the endoplasmic reticulum membrane. Its pathway is protein modification; protein glycosylation. Functionally, subunit of the oligosaccharyl transferase (OST) complex that catalyzes the initial transfer of a defined glycan (Glc(3)Man(9)GlcNAc(2) in eukaryotes) from the lipid carrier dolichol-pyrophosphate to an asparagine residue within an Asn-X-Ser/Thr consensus motif in nascent polypeptide chains, the first step in protein N-glycosylation. N-glycosylation occurs cotranslationally and the complex associates with the Sec61 complex at the channel-forming translocon complex that mediates protein translocation across the endoplasmic reticulum (ER). All subunits are required for a maximal enzyme activity. The chain is Dolichyl-diphosphooligosaccharide--protein glycosyltransferase subunit 1A (OST1A) from Arabidopsis thaliana (Mouse-ear cress).